The following is a 418-amino-acid chain: Neurotensin receptor type 1 (418 aa).

Residues 1 to 67 (MRLNSSAPGT…TDIYSKVLVT (67 aa)) lie on the Extracellular side of the membrane. 3 N-linked (GlcNAc...) asparagine glycosylation sites follow: asparagine 4, asparagine 37, and asparagine 41. A helical transmembrane segment spans residues 68–88 (AVYLALFVVGTVGNTVTAFTL). Residues 89-102 (ARKKSLQSLQSTVH) are Cytoplasmic-facing. A helical transmembrane segment spans residues 103-122 (YHLGSLALSDLLTLLLAMPV). The Extracellular segment spans residues 123-142 (ELYNFIWVHHPWAFGDAGCR). Cysteines 141 and 224 form a disulfide. Residues 143–164 (GYYFLRDACTYATALNVASLSV) traverse the membrane as a helical segment. At 165–184 (ERYLAICHPFKAKTLMSRSR) the chain is on the cytoplasmic side. A helical transmembrane segment spans residues 185–205 (TKKFISAIWLASALLAVPMLF). At 206 to 234 (TMGEQNRSADGQHAGGLVCTPTIHTATVK) the chain is on the extracellular side. Residues 235–259 (VVIQVNTFMSFIFPMVVISVLNTII) form a helical membrane-spanning segment. Residues 260–303 (ANKLTVMVRQAAEQGQVCTVGGEHSTFSMAIEPGRVQALRHGVR) are Cytoplasmic-facing. A helical membrane pass occupies residues 304–325 (VLRAVVIAFVVCWLPYHVRRLM). The tract at residues 321–344 (VRRLMFCYISDEQWTPFLYDFYHY) is neurotensin binding. Over 326 to 343 (FCYISDEQWTPFLYDFYH) the chain is Extracellular. A helical transmembrane segment spans residues 344–364 (YFYMVTNALFYVSSTINPILY). Residues 365–418 (NLVSANFRHIFLATLACLCPVWRRRRKRPAFSRKADSVSSNHTLSSNATRETLY) lie on the Cytoplasmic side of the membrane. S-palmitoyl cysteine attachment occurs at residues cysteine 381 and cysteine 383.

Belongs to the G-protein coupled receptor 1 family. Neurotensin receptor subfamily. NTSR1 sub-subfamily. Interacts (palmitoylated form) with GNA11. N-glycosylated. In terms of processing, palmitoylated; this is required for normal localization at membrane rafts and normal GNA11-mediated activation of down-stream signaling cascades. The palmitoylation level increases in response to neurotensin treatment. Expressed in prostate (at protein level). Detected in colon and peripheral blood mononuclear cells. Detected at very low levels in brain.

Its subcellular location is the cell membrane. The protein localises to the membrane raft. Functionally, G-protein coupled receptor for the tridecapeptide neurotensin (NTS). Signaling is effected via G proteins that activate a phosphatidylinositol-calcium second messenger system. Signaling leads to the activation of downstream MAP kinases and protects cells against apoptosis. This chain is Neurotensin receptor type 1 (NTSR1), found in Homo sapiens (Human).